We begin with the raw amino-acid sequence, 97 residues long: Protein CYSTEINE-RICH TRANSMEMBRANE MODULE 7 (97 aa).

Residues 1–27 (MASYHVSHDSYQSPGPSPLYQPIIEAP) form a disordered region. The span at 15–27 (GPSPLYQPIIEAP) shows a compositional bias: pro residues. The chain crosses the membrane as a helical span at residues 68–88 (YVGCFPFLRSCLTTLCCCWFV).

This sequence belongs to the CYSTM1 family. Homodimer and heterodimers. Interacts with CYSTM3, CYSTM4, CYSTM5, CYSTM6, CYSTM10, WIH1/CYSTM13 and CYSTM11. Binds weakly to CYSTM1, CYSTM2 and CYSTM12. Mostly expressed in siliques and, to a lower extent, in stems, roots, leaves and flowers.

It localises to the cell membrane. In terms of biological role, involved in resistance to abiotic stress. The sequence is that of Protein CYSTEINE-RICH TRANSMEMBRANE MODULE 7 from Arabidopsis thaliana (Mouse-ear cress).